A 240-amino-acid polypeptide reads, in one-letter code: Probable septum site-determining protein MinC (240 aa).

It belongs to the MinC family. As to quaternary structure, interacts with MinD and FtsZ.

Cell division inhibitor that blocks the formation of polar Z ring septums. Rapidly oscillates between the poles of the cell to destabilize FtsZ filaments that have formed before they mature into polar Z rings. Prevents FtsZ polymerization. This chain is Probable septum site-determining protein MinC, found in Chromobacterium violaceum (strain ATCC 12472 / DSM 30191 / JCM 1249 / CCUG 213 / NBRC 12614 / NCIMB 9131 / NCTC 9757 / MK).